The following is a 490-amino-acid chain: Katanin p60 ATPase-containing subunit A-like 1 (490 aa).

At Met1 the chain carries N-acetylmethionine. The tract at residues 95–184 (DPAVWPPPVP…DGEMPKFDGA (90 aa)) is disordered. Basic and acidic residues predominate over residues 116–127 (PNREVRPLRKEM). Residues 128 to 139 (AGVGARGPVGRA) are compositionally biased toward low complexity. Basic and acidic residues predominate over residues 143-169 (SKSEKPSTSRDKDCRARGRDDKGRKNM). Ser174 is modified (phosphoserine). 248–255 (GPPGTGKT) contributes to the ATP binding site.

This sequence belongs to the AAA ATPase family. Katanin p60 subunit A1 subfamily. A-like 1 sub-subfamily. In terms of assembly, interacts with KATNB1 and KATNBL1.

It is found in the cytoplasm. The protein resides in the cytoskeleton. The protein localises to the spindle pole. Its subcellular location is the spindle. The catalysed reaction is n ATP + n H2O + a microtubule = n ADP + n phosphate + (n+1) alpha/beta tubulin heterodimers.. Regulates microtubule dynamics in Sertoli cells, a process that is essential for spermiogenesis and male fertility. Severs microtubules in an ATP-dependent manner, promoting rapid reorganization of cellular microtubule arrays. Has microtubule-severing activity in vitro. The protein is Katanin p60 ATPase-containing subunit A-like 1 of Papio anubis (Olive baboon).